The sequence spans 342 residues: Ribosomal RNA small subunit methyltransferase H (342 aa).

Residues 36-38, Asp56, Phe82, Asp100, and Gln107 contribute to the S-adenosyl-L-methionine site; that span reads GGH. A disordered region spans residues 311–342; sequence GESGMGKGNSAAASRFPTADSPFPASANGDAA.

This sequence belongs to the methyltransferase superfamily. RsmH family.

It localises to the cytoplasm. The catalysed reaction is cytidine(1402) in 16S rRNA + S-adenosyl-L-methionine = N(4)-methylcytidine(1402) in 16S rRNA + S-adenosyl-L-homocysteine + H(+). Functionally, specifically methylates the N4 position of cytidine in position 1402 (C1402) of 16S rRNA. This is Ribosomal RNA small subunit methyltransferase H from Xanthomonas axonopodis pv. citri (strain 306).